The primary structure comprises 296 residues: MPWQSVRILVDSVQAEPLSDALMEAGALSVSLEDADAGTVDETPLFGEPDHPSAELWPHSIAVVLLEADADVAETLRAAAAQAGVAAPLDYTVETVAEQDWVRLTQSQFDPIPISARLWIVPTWHEAPDSRALNLKLDPGLAFGTGSHPTTRLCLRWLDANLRGGETLLDYGCGSGILAIAAAKLGARRVEGVDIDPQAVSASRDNAALNEVDAHFGLPGELAAGEYDVVVANILTNPLKAMAPLLAGRVRSGGSLVLSGILAEQAEDVMAVYRPWFVFDAPASDEGWVRLVGVKR.

S-adenosyl-L-methionine-binding residues include Thr151, Gly172, Asp194, and Asn233.

This sequence belongs to the methyltransferase superfamily. PrmA family.

Its subcellular location is the cytoplasm. The catalysed reaction is L-lysyl-[protein] + 3 S-adenosyl-L-methionine = N(6),N(6),N(6)-trimethyl-L-lysyl-[protein] + 3 S-adenosyl-L-homocysteine + 3 H(+). Its function is as follows. Methylates ribosomal protein L11. This chain is Ribosomal protein L11 methyltransferase, found in Thiobacillus denitrificans (strain ATCC 25259 / T1).